The chain runs to 311 residues: Methionyl-tRNA formyltransferase (311 aa).

Residue 114 to 117 coordinates (6S)-5,6,7,8-tetrahydrofolate; that stretch reads SLLP.

Belongs to the Fmt family.

The enzyme catalyses L-methionyl-tRNA(fMet) + (6R)-10-formyltetrahydrofolate = N-formyl-L-methionyl-tRNA(fMet) + (6S)-5,6,7,8-tetrahydrofolate + H(+). In terms of biological role, attaches a formyl group to the free amino group of methionyl-tRNA(fMet). The formyl group appears to play a dual role in the initiator identity of N-formylmethionyl-tRNA by promoting its recognition by IF2 and preventing the misappropriation of this tRNA by the elongation apparatus. This Corynebacterium diphtheriae (strain ATCC 700971 / NCTC 13129 / Biotype gravis) protein is Methionyl-tRNA formyltransferase.